A 101-amino-acid polypeptide reads, in one-letter code: Protein RADIALIS-like 2 (101 aa).

The 56-residue stretch at 9–64 (YGSGSWTVKQNKAFERALAVYDQDTPDRWHNVARAVGGKTPEEAKRQYDLLVRDIE) folds into the SANT domain. The tract at residues 69–101 (GHVPFPDYKTTTGNSNRGRLRDEEKRMRSMKLQ) is disordered.

In terms of tissue distribution, expressed in the funiculus of ovules and in embryos. In young ovules, expression is observed in the adaxial side of the funiculus (the stalk connecting the embryo sac to the placenta). Also expressed in heart-stage embryos, in the cortex and endodermis of the hypocotyl region but not in the cotyledons, shoot and root apical meristems, provasculature or epidermis. Not detected in young seedlings, mature roots or in young floral primordia.

It localises to the nucleus. Probable transcription factor. Required for female gametophyte development. In Arabidopsis thaliana (Mouse-ear cress), this protein is Protein RADIALIS-like 2 (RL2).